The following is a 649-amino-acid chain: Ubiquitin-associated and SH3 domain-containing protein B (649 aa).

Ser20 bears the Phosphoserine mark. At Thr23 the chain carries Phosphothreonine. Positions 27 to 76 constitute a UBA domain; sequence NRQQRPGTIKHGSALDVLLSMGFPRARAQKALASTGGRSVQAACDWLFSH. The 66-residue stretch at 254-319 folds into the SH3 domain; it reads ANHETLQVIY…PENYITKADE (66 aa). The protein tyrosine phosphatase stretch occupies residues 380 to 649; that stretch reads GPQKRCLFVC…FNWRETLLQE (270 aa). Residue Arg390 is part of the active site. The active-site Tele-phosphohistidine intermediate is the His391. His576 is an active-site residue.

In terms of assembly, homodimer. Interacts with JAK2 (in vitro). Interacts with CBL. Part of a complex containing CBL and activated EGFR. Interacts with ubiquitin and with mono-ubiquitinated proteins. Interacts with ZAP70 (ubiquitinated form).

It localises to the cytoplasm. The protein resides in the nucleus. It carries out the reaction O-phospho-L-tyrosyl-[protein] + H2O = L-tyrosyl-[protein] + phosphate. In terms of biological role, interferes with CBL-mediated down-regulation and degradation of receptor-type tyrosine kinases. Promotes accumulation of activated target receptors, such as T-cell receptors and EGFR, on the cell surface. Exhibits tyrosine phosphatase activity toward several substrates including EGFR, FAK, SYK, and ZAP70. Down-regulates proteins that are dually modified by both protein tyrosine phosphorylation and ubiquitination. The chain is Ubiquitin-associated and SH3 domain-containing protein B (UBASH3B) from Homo sapiens (Human).